A 130-amino-acid chain; its full sequence is Holo-[acyl-carrier-protein] synthase (130 aa).

Residues D9 and E58 each coordinate Mg(2+).

It belongs to the P-Pant transferase superfamily. AcpS family. Mg(2+) is required as a cofactor.

It is found in the cytoplasm. It carries out the reaction apo-[ACP] + CoA = holo-[ACP] + adenosine 3',5'-bisphosphate + H(+). In terms of biological role, transfers the 4'-phosphopantetheine moiety from coenzyme A to a Ser of acyl-carrier-protein. The polypeptide is Holo-[acyl-carrier-protein] synthase (Mycolicibacterium paratuberculosis (strain ATCC BAA-968 / K-10) (Mycobacterium paratuberculosis)).